Reading from the N-terminus, the 1343-residue chain is DNA-directed RNA polymerase subunit beta (1343 aa).

Belongs to the RNA polymerase beta chain family. The RNAP catalytic core consists of 2 alpha, 1 beta, 1 beta' and 1 omega subunit. When a sigma factor is associated with the core the holoenzyme is formed, which can initiate transcription.

The catalysed reaction is RNA(n) + a ribonucleoside 5'-triphosphate = RNA(n+1) + diphosphate. Its function is as follows. DNA-dependent RNA polymerase catalyzes the transcription of DNA into RNA using the four ribonucleoside triphosphates as substrates. This Haemophilus influenzae (strain PittEE) protein is DNA-directed RNA polymerase subunit beta.